An 87-amino-acid chain; its full sequence is Small ribosomal subunit protein bS16 (87 aa).

The protein belongs to the bacterial ribosomal protein bS16 family.

The sequence is that of Small ribosomal subunit protein bS16 from Onion yellows phytoplasma (strain OY-M).